A 293-amino-acid polypeptide reads, in one-letter code: Probable chromosome 2-partitioning protein ParB (293 aa).

Belongs to the ParB family.

In terms of biological role, involved in chromosome partition. Localize to both poles of the predivisional cell following completion of DNA replication. Binds to the DNA origin of replication. The sequence is that of Probable chromosome 2-partitioning protein ParB (parB2) from Deinococcus radiodurans (strain ATCC 13939 / DSM 20539 / JCM 16871 / CCUG 27074 / LMG 4051 / NBRC 15346 / NCIMB 9279 / VKM B-1422 / R1).